A 164-amino-acid chain; its full sequence is ATP synthase subunit b 1 (164 aa).

Residues 8 to 28 (PETWVAIAFVILMGLFAYLGV) traverse the membrane as a helical segment.

This sequence belongs to the ATPase B chain family. In terms of assembly, F-type ATPases have 2 components, F(1) - the catalytic core - and F(0) - the membrane proton channel. F(1) has five subunits: alpha(3), beta(3), gamma(1), delta(1), epsilon(1). F(0) has three main subunits: a(1), b(2) and c(10-14). The alpha and beta chains form an alternating ring which encloses part of the gamma chain. F(1) is attached to F(0) by a central stalk formed by the gamma and epsilon chains, while a peripheral stalk is formed by the delta and b chains.

The protein localises to the cell inner membrane. Functionally, f(1)F(0) ATP synthase produces ATP from ADP in the presence of a proton or sodium gradient. F-type ATPases consist of two structural domains, F(1) containing the extramembraneous catalytic core and F(0) containing the membrane proton channel, linked together by a central stalk and a peripheral stalk. During catalysis, ATP synthesis in the catalytic domain of F(1) is coupled via a rotary mechanism of the central stalk subunits to proton translocation. Its function is as follows. Component of the F(0) channel, it forms part of the peripheral stalk, linking F(1) to F(0). The protein is ATP synthase subunit b 1 of Bradyrhizobium sp. (strain ORS 278).